We begin with the raw amino-acid sequence, 342 residues long: Protein-ribulosamine 3-kinase, chloroplastic (342 aa).

The transit peptide at 1-46 directs the protein to the chloroplast; that stretch reads MANVALLSAASPSTSSAAPRLRHVARRRPSRRSACPRSAASRLSIM. 141 to 143 is a binding site for ATP; it reads EFI. The active-site Proton acceptor is D246.

The protein belongs to the fructosamine kinase family.

The protein localises to the plastid. It is found in the chloroplast. The catalysed reaction is N(6)-D-ribulosyl-L-lysyl-[protein] + ATP = N(6)-(3-O-phospho-D-ribulosyl)-L-lysyl-[protein] + ADP + H(+). It carries out the reaction N(6)-(D-erythrulosyl)-L-lysyl-[protein] + ATP = N(6)-(3-O-phospho-D-erythrulosyl)-L-lysyl-[protein] + ADP + H(+). In terms of biological role, initiates a process leading to the deglycation of proteins. Phosphorylates low-molecular-mass and protein-bound erythrulosamines and ribulosamines, but not fructosamines or psicosamines, on the third carbon of the sugar moiety. Protein-bound erythrulosamine 3-phosphates and ribulosamine 3-phosphates are unstable and decompose under physiological conditions. This is Protein-ribulosamine 3-kinase, chloroplastic from Oryza sativa subsp. japonica (Rice).